A 65-amino-acid polypeptide reads, in one-letter code: Alpha-toxin Bs-Tx28 (65 aa).

In terms of domain architecture, LCN-type CS-alpha/beta spans 3 to 65; sequence RDAYIADDKN…VPIRIPGKCR (63 aa). 4 disulfides stabilise this stretch: Cys-13–Cys-64, Cys-17–Cys-37, Cys-23–Cys-47, and Cys-27–Cys-49. At Arg-65 the chain carries Arginine amide.

The protein belongs to the long (4 C-C) scorpion toxin superfamily. Sodium channel inhibitor family. Alpha subfamily. Expressed by the venom gland.

It is found in the secreted. Alpha toxins bind voltage-independently at site-3 of sodium channels (Nav) and inhibit the inactivation of the activated channels, thereby blocking neuronal transmission. This toxin inhibits the inactivation of activated TTX-sensitive sodium channels (Nav). This is Alpha-toxin Bs-Tx28 from Hottentotta tamulus sindicus (Scorpion).